Consider the following 409-residue polypeptide: Nucleoprotein (409 aa).

Disordered regions lie at residues M1–N32, L44–K63, G120–S145, and R164–E193. The segment covering P15 to G31 has biased composition (low complexity). Positions S29–I160 are RNA-binding. One can recognise a CoV N NTD domain in the interval G31–D156. Residues R164–A179 show a composition bias toward low complexity. Positions P180–A192 are enriched in basic and acidic residues. S190 carries the phosphoserine; by host modification. A CoV N CTD domain is found at T215–P331. The tract at residues R226 to D333 is dimerization. The cysteines at positions 320 and 323 are disulfide-linked. A disordered region spans residues V327–L409. Residues R341–P355 show a composition bias toward polar residues. Residues K368 to N384 show a composition bias toward basic and acidic residues. The residue at position 378 (T378) is a Phosphothreonine; by host. S379 is subject to Phosphoserine; by host.

This sequence belongs to the gammacoronavirus nucleocapsid protein family. As to quaternary structure, homooligomer. Both monomeric and oligomeric forms interact with RNA. Interacts with protein M. Interacts with NSP3; this interaction serves to tether the genome to the newly translated replicase-transcriptase complex at a very early stage of infection. Post-translationally, ADP-ribosylated. The ADP-ribosylation is retained in the virion during infection. Phosphorylated on serine and threonine residues.

It is found in the virion. It localises to the host endoplasmic reticulum-Golgi intermediate compartment. Its subcellular location is the host Golgi apparatus. Its function is as follows. Packages the positive strand viral genome RNA into a helical ribonucleocapsid (RNP) and plays a fundamental role during virion assembly through its interactions with the viral genome and membrane protein M. Plays an important role in enhancing the efficiency of subgenomic viral RNA transcription as well as viral replication. This is Nucleoprotein from Avian infectious bronchitis virus (strain D1466) (IBV).